We begin with the raw amino-acid sequence, 88 residues long: uncharacterized protein (88 aa).

Belongs to the phD/YefM antitoxin family.

This is an uncharacterized protein from Sinorhizobium fredii (strain NBRC 101917 / NGR234).